The following is a 631-amino-acid chain: Phosphomethylpyrimidine synthase (631 aa).

Residues N239, M268, Y297, H333, 353–355 (SRG), 394–397 (DGLR), and E433 each bind substrate. H437 serves as a coordination point for Zn(2+). Y460 is a substrate binding site. H501 provides a ligand contact to Zn(2+). [4Fe-4S] cluster is bound by residues C581, C584, and C589.

The protein belongs to the ThiC family. Homodimer. Requires [4Fe-4S] cluster as cofactor.

It carries out the reaction 5-amino-1-(5-phospho-beta-D-ribosyl)imidazole + S-adenosyl-L-methionine = 4-amino-2-methyl-5-(phosphooxymethyl)pyrimidine + CO + 5'-deoxyadenosine + formate + L-methionine + 3 H(+). Its pathway is cofactor biosynthesis; thiamine diphosphate biosynthesis. Its function is as follows. Catalyzes the synthesis of the hydroxymethylpyrimidine phosphate (HMP-P) moiety of thiamine from aminoimidazole ribotide (AIR) in a radical S-adenosyl-L-methionine (SAM)-dependent reaction. The polypeptide is Phosphomethylpyrimidine synthase (Escherichia coli O6:H1 (strain CFT073 / ATCC 700928 / UPEC)).